A 446-amino-acid chain; its full sequence is Zinc finger protein 19 (446 aa).

Residues 2–73 (VTFEDVAVHF…EAQDDPPAET (72 aa)) form the KRAB domain. 9 consecutive C2H2-type zinc fingers follow at residues 149 to 171 (FICEECGKSFSYFSYYARHQRIH), 177 to 199 (FECSECGKAFNGNSSLIRHQRIH), 205 to 227 (YQCEECGRAFNDNANLIRHQRIH), 233 to 255 (YYCTECGNSFTSSSEFVIHQRIH), 261 to 283 (YECNECGKAFVGNSPLLRHQKIH), 289 to 311 (YECNECGKSFGRTSHLSQHQRIH), 317 to 339 (YSCKVCGQAFNFHTKLTRHQRIH), 345 to 367 (FDCVDCGKAFSAQEQLKRHLRIH), and 373 to 395 (YVCDECGKAFTSKRNLHQHQRIH). The C2H2-type 10; degenerate zinc-finger motif lies at 401–423 (YEYSKYEKAFGTSSQLGHLEHVH).

This sequence belongs to the krueppel C2H2-type zinc-finger protein family.

It localises to the nucleus. Functionally, may be involved in transcriptional regulation. This is Zinc finger protein 19 (ZNF19) from Pongo abelii (Sumatran orangutan).